The chain runs to 156 residues: Dihydrofolate reductase (156 aa).

Residues 1–156 form the DHFR domain; that stretch reads MLKLIWCQTL…VNYYSNKKEK (156 aa).

This sequence belongs to the dihydrofolate reductase family.

The catalysed reaction is (6S)-5,6,7,8-tetrahydrofolate + NADP(+) = 7,8-dihydrofolate + NADPH + H(+). It participates in cofactor biosynthesis; tetrahydrofolate biosynthesis; 5,6,7,8-tetrahydrofolate from 7,8-dihydrofolate: step 1/1. Functionally, key enzyme in folate metabolism. Catalyzes an essential reaction for de novo glycine and purine synthesis, and for DNA precursor synthesis. The sequence is that of Dihydrofolate reductase (folA) from Ureaplasma parvum serovar 3 (strain ATCC 700970).